The primary structure comprises 277 residues: Ribosomal RNA small subunit methyltransferase I (277 aa).

This sequence belongs to the methyltransferase superfamily. RsmI family.

Its subcellular location is the cytoplasm. The enzyme catalyses cytidine(1402) in 16S rRNA + S-adenosyl-L-methionine = 2'-O-methylcytidine(1402) in 16S rRNA + S-adenosyl-L-homocysteine + H(+). In terms of biological role, catalyzes the 2'-O-methylation of the ribose of cytidine 1402 (C1402) in 16S rRNA. The polypeptide is Ribosomal RNA small subunit methyltransferase I (Mycoplasma genitalium (strain ATCC 33530 / DSM 19775 / NCTC 10195 / G37) (Mycoplasmoides genitalium)).